A 190-amino-acid polypeptide reads, in one-letter code: Peptidyl-tRNA hydrolase (190 aa).

Residue Tyr14 participates in tRNA binding. The Proton acceptor role is filled by His19. Positions 64, 66, and 112 each coordinate tRNA.

The protein belongs to the PTH family. As to quaternary structure, monomer.

It localises to the cytoplasm. It carries out the reaction an N-acyl-L-alpha-aminoacyl-tRNA + H2O = an N-acyl-L-amino acid + a tRNA + H(+). Hydrolyzes ribosome-free peptidyl-tRNAs (with 1 or more amino acids incorporated), which drop off the ribosome during protein synthesis, or as a result of ribosome stalling. Its function is as follows. Catalyzes the release of premature peptidyl moieties from peptidyl-tRNA molecules trapped in stalled 50S ribosomal subunits, and thus maintains levels of free tRNAs and 50S ribosomes. In Chlorobium chlorochromatii (strain CaD3), this protein is Peptidyl-tRNA hydrolase.